Here is a 586-residue protein sequence, read N- to C-terminus: Arginine--tRNA ligase (586 aa).

The short motif at 127-137 is the 'HIGH' region element; the sequence is PNVAKEMHVGH.

It belongs to the class-I aminoacyl-tRNA synthetase family. Monomer.

The protein resides in the cytoplasm. It carries out the reaction tRNA(Arg) + L-arginine + ATP = L-arginyl-tRNA(Arg) + AMP + diphosphate. The sequence is that of Arginine--tRNA ligase (argS) from Streptomyces coelicolor (strain ATCC BAA-471 / A3(2) / M145).